The primary structure comprises 877 residues: DNA polymerase I (877 aa).

Positions 177-270 constitute a 5'-3' exonuclease domain; sequence TPAQFIDLKA…LEDLVYSGPD (94 aa). In terms of domain architecture, 3'-5' exonuclease spans 302 to 465; the sequence is DFTIVDQISQ…TEPILLEKLS (164 aa).

It belongs to the DNA polymerase type-A family. Single-chain monomer with multiple functions.

The catalysed reaction is DNA(n) + a 2'-deoxyribonucleoside 5'-triphosphate = DNA(n+1) + diphosphate. In addition to polymerase activity, this DNA polymerase exhibits 3'-5' and 5'-3' exonuclease activity. The sequence is that of DNA polymerase I (polA) from Streptococcus pneumoniae serotype 4 (strain ATCC BAA-334 / TIGR4).